Consider the following 169-residue polypeptide: MYTSGYAHRSSSFSSAASKIARVSTENTTAGLISEVVYREDQPMMTQLLLLPLLQQLGQQSRWQLWLTPQQKLSREWVQASGLPLTKVMQISQLSPCHTVESMVRALRTGNYSVVIGWLADDLTEEEHAELVDAANEGNAMGFIMRPVSASSHATRQLSGLKIHSNLYH.

A ftsZ binding region spans residues 106–112 (ALRTGNY). The tract at residues 162–169 (KIHSNLYH) is lon protease binding.

It belongs to the SulA family. Interacts with FtsZ. In terms of processing, is rapidly cleaved and degraded by the Lon protease once DNA damage is repaired.

Functionally, component of the SOS system and an inhibitor of cell division. Accumulation of SulA causes rapid cessation of cell division and the appearance of long, non-septate filaments. In the presence of GTP, binds a polymerization-competent form of FtsZ in a 1:1 ratio, thus inhibiting FtsZ polymerization and therefore preventing it from participating in the assembly of the Z ring. This mechanism prevents the premature segregation of damaged DNA to daughter cells during cell division. The protein is Cell division inhibitor SulA of Shigella boydii serotype 18 (strain CDC 3083-94 / BS512).